A 118-amino-acid polypeptide reads, in one-letter code: MSRNTRINALLLLAVAALAVLPLVLGLGDHKEEPFAGADAEAETAITEIEPDYEPWFSPLHEPPSGEVESALFALQAALGAGVLAYYFGLRRGRRQGEERASAASGAAAAPGDAPEGD.

2 consecutive transmembrane segments (helical) span residues 7–27 (INAL…VLGL) and 70–90 (SALF…YFGL). The segment at 99–118 (ERASAASGAAAAPGDAPEGD) is disordered. The segment covering 102–118 (SAASGAAAAPGDAPEGD) has biased composition (low complexity).

Belongs to the CbiN family. In terms of assembly, forms an energy-coupling factor (ECF) transporter complex composed of an ATP-binding protein (A component, CbiO), a transmembrane protein (T component, CbiQ) and 2 possible substrate-capture proteins (S components, CbiM and CbiN) of unknown stoichimetry.

It is found in the cell membrane. It participates in cofactor biosynthesis; adenosylcobalamin biosynthesis. Part of the energy-coupling factor (ECF) transporter complex CbiMNOQ involved in cobalt import. This chain is Cobalt transport protein CbiN, found in Streptomyces coelicolor (strain ATCC BAA-471 / A3(2) / M145).